Here is a 432-residue protein sequence, read N- to C-terminus: Adenylosuccinate synthetase 2 (432 aa).

Residues 13–19 (GDEGKGK) and 41–43 (GHT) each bind GTP. Asp-14 functions as the Proton acceptor in the catalytic mechanism. The Mg(2+) site is built by Asp-14 and Gly-41. IMP is bound by residues 14 to 17 (DEGK), 39 to 42 (NAGH), Thr-130, Arg-144, Gln-225, Thr-240, and Arg-304. Residue His-42 is the Proton donor of the active site. 300-306 (ATTGRSR) serves as a coordination point for substrate. GTP is bound by residues Arg-306, 332 to 334 (KLD), and 415 to 417 (STG).

It belongs to the adenylosuccinate synthetase family. Homodimer. The cofactor is Mg(2+).

Its subcellular location is the cytoplasm. The enzyme catalyses IMP + L-aspartate + GTP = N(6)-(1,2-dicarboxyethyl)-AMP + GDP + phosphate + 2 H(+). It functions in the pathway purine metabolism; AMP biosynthesis via de novo pathway; AMP from IMP: step 1/2. In terms of biological role, plays an important role in the de novo pathway of purine nucleotide biosynthesis. Catalyzes the first committed step in the biosynthesis of AMP from IMP. The protein is Adenylosuccinate synthetase 2 of Photorhabdus laumondii subsp. laumondii (strain DSM 15139 / CIP 105565 / TT01) (Photorhabdus luminescens subsp. laumondii).